Here is a 721-residue protein sequence, read N- to C-terminus: Dolichyl-diphosphooligosaccharide--protein glycosyltransferase subunit STT3B (721 aa).

At 1-25 the chain is on the cytoplasmic side; it reads MAAATALDSLPAPLRSLRLKTKQQE. Residues 26–46 form a helical membrane-spanning segment; it reads LLLRVSALALIYVLAFVVRLF. The Lumenal portion of the chain corresponds to 47 to 129; the sequence is SVLRYESMIH…VHIREVCVLT (83 aa). Residues 57-59 carry the DXD motif 1 motif; the sequence is EFD. Asp-59 serves as a coordination point for Mn(2+). The helical transmembrane segment at 130-148 threads the bilayer; it reads APFFAANTTLVAYAFGREI. Residues 149–150 lie on the Cytoplasmic side of the membrane; it reads WD. A helical transmembrane segment spans residues 151–168; the sequence is SGAGLVAAALIAVCPGYI. Over 169 to 179 the chain is Lumenal; the sequence is SRSVAGSYDNE. The Mn(2+) site is built by Asp-177 and Glu-179. The short motif at 177-179 is the DXD motif 2 element; the sequence is DNE. Residues 180 to 199 traverse the membrane as a helical segment; sequence GVAIFALLLTFYLFVRAVNT. The Cytoplasmic portion of the chain corresponds to 200-201; sequence GS. The helical transmembrane segment at 202-216 threads the bilayer; the sequence is LAWSLASAFGYFYMV. The Lumenal portion of the chain corresponds to 217-221; sequence SAWGG. A helical transmembrane segment spans residues 222 to 238; sequence YVFIINLLPLYVLVLLV. Residues 239 to 243 lie on the Cytoplasmic side of the membrane; that stretch reads TGRYS. The chain crosses the membrane as a helical span at residues 244-269; the sequence is QRLYVAYNSTYVLGMLLAMQIRFVGF. Topologically, residues 270–277 are lumenal; that stretch reads QHVQSGEH. Residues 278-297 form a helical membrane-spanning segment; sequence MAAMGVFFLLQVFFFLDWVK. Over 298 to 313 the chain is Cytoplasmic; sequence YLLNDAKLFKSFLRIT. Residues 314–334 form a helical membrane-spanning segment; sequence LTCVITVGTLALGIGTASGYI. Residues 335-367 lie on the Lumenal side of the membrane; sequence SPWTGRFYSLLDPTYAKDHIPIIASVSEHQPTA. Positions 359–362 match the SVSE motif motif; the sequence is SVSE. A helical membrane pass occupies residues 368–390; it reads WSSFMFDFHILLFLFPAGLYFCF. At 391 to 396 the chain is on the cytoplasmic side; it reads KRLSDA. A helical membrane pass occupies residues 397–413; sequence TIFIVMYGLTSMYFAGV. Residues 414-417 lie on the Lumenal side of the membrane; that stretch reads MVRL. Position 416 (Arg-416) interacts with dolichyl diphosphooligosaccharide. Residues 418–439 form a helical membrane-spanning segment; it reads ILVAAPAVCLISAIAASATIKN. Topologically, residues 440 to 471 are cytoplasmic; sequence LTTLIRTKSKSPQTVSGKSSGSKAAAKGAVDQ. Residues 472–492 traverse the membrane as a helical segment; that stretch reads SLPFQQNVAIALLLGAFYLLS. Residues 493–721 lie on the Lumenal side of the membrane; the sequence is RYAVHCTWVT…YKVKPPKNRS (229 aa). An interacts with target acceptor peptide in protein substrate region spans residues 548 to 550; sequence WWD. Residues 548-552 carry the WWDYG motif motif; that stretch reads WWDYG. Tyr-553 contacts dolichyl diphosphooligosaccharide. N-linked (GlcNAc...) asparagine glycans are attached at residues Asn-560 and Asn-567. N-linked (GlcNAc...) (high mannose) asparagine glycosylation occurs at Asn-571. A DK motif motif is present at residues 615 to 622; sequence DINKFLWM.

This sequence belongs to the STT3 family. As to quaternary structure, component of the oligosaccharyltransferase (OST) complex. Requires Mg(2+) as cofactor. It depends on Mn(2+) as a cofactor.

The protein resides in the endoplasmic reticulum membrane. The enzyme catalyses a di-trans,poly-cis-dolichyl diphosphooligosaccharide + L-asparaginyl-[protein] = N(4)-(oligosaccharide-(1-&gt;4)-N-acetyl-beta-D-glucosaminyl-(1-&gt;4)-N-acetyl-beta-D-glucosaminyl)-L-asparaginyl-[protein] + a di-trans,poly-cis-dolichyl diphosphate + H(+). It functions in the pathway protein modification; protein glycosylation. Catalytic subunit of the oligosaccharyl transferase (OST) complex that catalyzes the initial transfer of a defined glycan (Glc(3)Man(9)GlcNAc(2) in eukaryotes) from the lipid carrier dolichol-pyrophosphate to an asparagine residue within an Asn-X-Ser/Thr consensus motif in nascent polypeptide chains, the first step in protein N-glycosylation. N-glycosylation occurs cotranslationally and the complex associates with the Sec61 complex at the channel-forming translocon complex that mediates protein translocation across the endoplasmic reticulum (ER). All subunits are required for a maximal enzyme activity. This subunit contains the active site and the acceptor peptide and donor lipid-linked oligosaccharide (LLO) binding pockets. The polypeptide is Dolichyl-diphosphooligosaccharide--protein glycosyltransferase subunit STT3B (STT3B) (Oryza sativa subsp. japonica (Rice)).